We begin with the raw amino-acid sequence, 41 residues long: U3-theraphotoxin-Hs1a (41 aa).

Disulfide bonds link C2/C16, C9/C37, and C17/C40.

This sequence belongs to the neurotoxin 14 (magi-1) family. 01 (HNTX-16) subfamily. In terms of tissue distribution, expressed by the venom gland.

Its subcellular location is the secreted. In terms of biological role, intracerebroventricular injection paralyzes mice. Has no effect on voltage-gated sodium currents. In Cyriopagopus schmidti (Chinese bird spider), this protein is U3-theraphotoxin-Hs1a.